A 689-amino-acid polypeptide reads, in one-letter code: Armadillo-like helical domain-containing protein 3 (689 aa).

Residues Ile520 to Gly538 form a helical membrane-spanning segment.

It belongs to the ARMH3 family.

The protein localises to the golgi apparatus membrane. The protein resides in the cytoplasm. May be involved in Golgi maintenance and protein secretion. This is Armadillo-like helical domain-containing protein 3 from Xenopus laevis (African clawed frog).